Consider the following 141-residue polypeptide: Large ribosomal subunit protein uL11 (141 aa).

It belongs to the universal ribosomal protein uL11 family. In terms of assembly, part of the ribosomal stalk of the 50S ribosomal subunit. Interacts with L10 and the large rRNA to form the base of the stalk. L10 forms an elongated spine to which L12 dimers bind in a sequential fashion forming a multimeric L10(L12)X complex. Post-translationally, one or more lysine residues are methylated.

Its function is as follows. Forms part of the ribosomal stalk which helps the ribosome interact with GTP-bound translation factors. The polypeptide is Large ribosomal subunit protein uL11 (Wolinella succinogenes (strain ATCC 29543 / DSM 1740 / CCUG 13145 / JCM 31913 / LMG 7466 / NCTC 11488 / FDC 602W) (Vibrio succinogenes)).